Consider the following 115-residue polypeptide: Toxin-like structure LSTX-D2 (115 aa).

Residues 1–22 form the signal peptide; that stretch reads MKVLVLFSVLFLTLFSYSSTEA. Residues 23-44 constitute a propeptide that is removed on maturation; it reads IDEFDSDAEDDMLSLMANEQVR. 4 disulfides stabilise this stretch: cysteine 48–cysteine 63, cysteine 55–cysteine 72, cysteine 62–cysteine 87, and cysteine 74–cysteine 85.

Belongs to the neurotoxin 19 (CSTX) family. 01 subfamily. As to expression, expressed by the venom gland.

The protein resides in the secreted. The polypeptide is Toxin-like structure LSTX-D2 (Lycosa singoriensis (Wolf spider)).